Consider the following 591-residue polypeptide: Aspartate--tRNA(Asp/Asn) ligase (591 aa).

Glu-174 contacts L-aspartate. Residues 198–201 (QLFK) are aspartate. Arg-220 lines the L-aspartate pocket. ATP contacts are provided by residues 220–222 (RDE) and Gln-229. Residue His-450 participates in L-aspartate binding. ATP is bound at residue Glu-483. Position 490 (Arg-490) interacts with L-aspartate. 535–538 (GLDR) is a binding site for ATP.

Belongs to the class-II aminoacyl-tRNA synthetase family. Type 1 subfamily. In terms of assembly, homodimer.

The protein resides in the cytoplasm. The catalysed reaction is tRNA(Asx) + L-aspartate + ATP = L-aspartyl-tRNA(Asx) + AMP + diphosphate. In terms of biological role, aspartyl-tRNA synthetase with relaxed tRNA specificity since it is able to aspartylate not only its cognate tRNA(Asp) but also tRNA(Asn). Reaction proceeds in two steps: L-aspartate is first activated by ATP to form Asp-AMP and then transferred to the acceptor end of tRNA(Asp/Asn). The polypeptide is Aspartate--tRNA(Asp/Asn) ligase (Pseudomonas savastanoi pv. phaseolicola (strain 1448A / Race 6) (Pseudomonas syringae pv. phaseolicola (strain 1448A / Race 6))).